Consider the following 94-residue polypeptide: Co-chaperonin GroES (94 aa).

It belongs to the GroES chaperonin family. As to quaternary structure, heptamer of 7 subunits arranged in a ring. Interacts with the chaperonin GroEL.

It is found in the cytoplasm. Functionally, together with the chaperonin GroEL, plays an essential role in assisting protein folding. The GroEL-GroES system forms a nano-cage that allows encapsulation of the non-native substrate proteins and provides a physical environment optimized to promote and accelerate protein folding. GroES binds to the apical surface of the GroEL ring, thereby capping the opening of the GroEL channel. In Streptococcus agalactiae, this protein is Co-chaperonin GroES.